Reading from the N-terminus, the 230-residue chain is Ion-translocating oxidoreductase complex subunit E (230 aa).

5 helical membrane passes run 22 to 42, 63 to 83, 86 to 106, 125 to 145, and 182 to 202; these read LLGLCPLLAVTSTATNALGLG, TPAEIRIPIYVMIIASVVSAV, LINAYAFGLYQSLGIFIPLIV, WLSALDGFSIGMGATGAMFVL, and PFLLAMLPPGAFIGLGLMLAV.

It belongs to the NqrDE/RnfAE family. In terms of assembly, the complex is composed of six subunits: RsxA, RsxB, RsxC, RsxD, RsxE and RsxG.

Its subcellular location is the cell inner membrane. In terms of biological role, part of a membrane-bound complex that couples electron transfer with translocation of ions across the membrane. Required to maintain the reduced state of SoxR. The protein is Ion-translocating oxidoreductase complex subunit E of Salmonella paratyphi A (strain ATCC 9150 / SARB42).